The chain runs to 306 residues: MQLRQVIIAYKAGDPTSKAAADDCAHCLESQGIHVMLGPSGARDNPFPVFLASATEPIDLAIVLGGDGTVLAAARHLSDAGIPLLTFNVGGHLGFLTQPRDFFQPEAELWDRLRNDQYAVEQRMMLAASLHEGGRENREPISETYYALNDMCVKPAAPDRMSVCILEMEVDGEIIDQYQGDGLIVSTPTGSTCYTAAAHGPIVHPGVDALAVTPICAMSLSSRPIVIPPRSVVSVWPLGTQDPTIKLWMDGVLATSIWPGQRVDIRMAEKPAQFLVLDSDRSFYRILREKLQWAGAVIHYNNNFRN.

Catalysis depends on aspartate 67, which acts as the Proton acceptor. NAD(+)-binding positions include 67 to 68 (DG), 149 to 150 (ND), and aspartate 181.

It belongs to the NAD kinase family. The cofactor is a divalent metal cation.

The protein resides in the cytoplasm. It catalyses the reaction NAD(+) + ATP = ADP + NADP(+) + H(+). Involved in the regulation of the intracellular balance of NAD and NADP, and is a key enzyme in the biosynthesis of NADP. Catalyzes specifically the phosphorylation on 2'-hydroxyl of the adenosine moiety of NAD to yield NADP. This chain is NAD kinase 1, found in Synechococcus sp. (strain ATCC 27144 / PCC 6301 / SAUG 1402/1) (Anacystis nidulans).